Consider the following 280-residue polypeptide: 2-dehydro-3-deoxyphosphooctonate aldolase (280 aa).

It belongs to the KdsA family.

It is found in the cytoplasm. The catalysed reaction is D-arabinose 5-phosphate + phosphoenolpyruvate + H2O = 3-deoxy-alpha-D-manno-2-octulosonate-8-phosphate + phosphate. It participates in carbohydrate biosynthesis; 3-deoxy-D-manno-octulosonate biosynthesis; 3-deoxy-D-manno-octulosonate from D-ribulose 5-phosphate: step 2/3. It functions in the pathway bacterial outer membrane biogenesis; lipopolysaccharide biosynthesis. The protein is 2-dehydro-3-deoxyphosphooctonate aldolase of Thioalkalivibrio sulfidiphilus (strain HL-EbGR7).